A 609-amino-acid chain; its full sequence is Ovochymase-2 (609 aa).

An N-terminal signal peptide occupies residues 1 to 22 (MPISKDKLILILGMVCLEQGHS). Residues 23–51 (ETLSSIRNPDCGQSLVKPQPQNYFSLFSR) constitute a propeptide, activation peptide. The Peptidase S1 domain occupies 52-299 (IVGGSQVEKG…VLPWILKHIQ (248 aa)). An intrachain disulfide couples Cys77 to Cys93. His92 acts as the Charge relay system in catalysis. N-linked (GlcNAc...) asparagine glycosylation occurs at Asn104. Ca(2+) is bound at residue Glu119. Residue Asp142 is the Charge relay system of the active site. Cystine bridges form between Cys176/Cys246, Cys207/Cys225, Cys236/Cys265, and Cys311/Cys341. The active-site Charge relay system is the Ser240. CUB domains lie at 311–421 (CSEP…YKAL) and 431–543 (CRSL…ISFI). Residue Asn356 is glycosylated (N-linked (GlcNAc...) asparagine). An intrachain disulfide couples Cys365 to Cys384. N-linked (GlcNAc...) asparagine glycosylation is present at Asn415. Cystine bridges form between Cys431-Cys458 and Cys485-Cys506. N-linked (GlcNAc...) asparagine glycosylation is found at Asn530 and Asn549. Positions 580-609 (HTKPPYEEDIGEMPAIDSGLLKQGERRGKH) are disordered.

Belongs to the peptidase S1 family. Only expressed in uterus tissue. Expressed in the initial segment (IS) of the caput epididymis, the region most proximal to the testis.

It localises to the secreted. Its function is as follows. May be required for sperm ADAM3 processing and consequential sperm fertilizing ability. In vitro, has an endopeptidase activity. This is Ovochymase-2 from Mus musculus (Mouse).